The chain runs to 782 residues: Calcium-independent phospholipase A2-gamma (782 aa).

A glycan (N-linked (GlcNAc...) asparagine) is linked at Asn4. 2 disordered regions span residues 219–275 (EKMS…PSAI) and 317–343 (SKSQSEEQEEPAKTDQAVSKDRNAEEK). A compositionally biased stretch (basic and acidic residues) spans 220–248 (KMSQQKENEHFRDKSELEDKKVEEGKLRS). N-linked (GlcNAc...) asparagine glycosylation is present at Asn361. In terms of domain architecture, PNPLA spans 445 to 640 (LSIDGGGTRG…LLNNPSALAM (196 aa)). The short motif at 449–454 (GGGTRG) is the GXGXXG element. A helical transmembrane segment spans residues 475-495 (LFDYICGVSTGAILAFMLGLF). The GXSXG signature appears at 481 to 485 (GVSTG). Ser483 functions as the Nucleophile in the catalytic mechanism. Residue Asp627 is the Proton acceptor of the active site. The DGA/G signature appears at 627-629 (DGG). N6-succinyllysine is present on Lys736.

In terms of tissue distribution, expressed in parenchymal tissues including heart, skeletal muscle, placenta, brain, liver and pancreas. Also expressed in bronchial epithelial cells and kidney. Highest expression is observed in skeletal muscle and heart.

It is found in the endoplasmic reticulum membrane. The protein resides in the mitochondrion membrane. It localises to the peroxisome membrane. It carries out the reaction a 1,2-diacyl-sn-glycero-3-phosphocholine + H2O = a 1-acyl-sn-glycero-3-phosphocholine + a fatty acid + H(+). It catalyses the reaction a 1,2-diacyl-sn-glycero-3-phosphocholine + H2O = a 2-acyl-sn-glycero-3-phosphocholine + a fatty acid + H(+). The enzyme catalyses a 1,2-diacyl-sn-glycero-3-phosphoethanolamine + H2O = a 1-acyl-sn-glycero-3-phosphoethanolamine + a fatty acid + H(+). The catalysed reaction is a 1-O-(1Z-alkenyl)-2-acyl-sn-glycero-3-phosphocholine + H2O = a 1-O-(1Z-alkenyl)-sn-glycero-3-phosphocholine + a fatty acid + H(+). It carries out the reaction a 1-acyl-sn-glycero-3-phosphocholine + H2O = sn-glycerol 3-phosphocholine + a fatty acid + H(+). It catalyses the reaction 1-acyl-2-(9Z,12Z)-octadecadienoyl-sn-glycero-3-phosphocholine + H2O = a 1-acyl-sn-glycero-3-phosphocholine + (9Z,12Z)-octadecadienoate + H(+). The enzyme catalyses 1-acyl-2-(5Z,8Z,11Z,14Z-eicosatetraenoyl)-sn-glycero-3-phosphocholine + H2O = a 1-acyl-sn-glycero-3-phosphocholine + (5Z,8Z,11Z,14Z)-eicosatetraenoate + H(+). The catalysed reaction is 1-hexadecanoyl-2-(5Z,8Z,11Z,14Z-eicosatetraenoyl)-sn-glycero-3-phosphocholine + H2O = 1-hexadecanoyl-sn-glycero-3-phosphocholine + (5Z,8Z,11Z,14Z)-eicosatetraenoate + H(+). It carries out the reaction 1-octadecanoyl-2-(9Z-octadecenoyl)-sn-glycero-3-phosphocholine + H2O = 1-octadecanoyl-sn-glycero-3-phosphocholine + (9Z)-octadecenoate + H(+). It catalyses the reaction 1-hexadecanoyl-2-(9Z-octadecenoyl)-sn-glycero-3-phosphocholine + H2O = 1-hexadecanoyl-sn-glycero-3-phosphocholine + (9Z)-octadecenoate + H(+). The enzyme catalyses 1-hexadecanoyl-2-(9Z,12Z-octadecadienoyl)-sn-glycero-3-phosphocholine + H2O = (9Z,12Z)-octadecadienoate + 1-hexadecanoyl-sn-glycero-3-phosphocholine + H(+). The catalysed reaction is 1-acyl-2-(9Z,12Z)-octadecadienoyl-sn-glycero-3-phosphoethanolamine + H2O = a 1-acyl-sn-glycero-3-phosphoethanolamine + (9Z,12Z)-octadecadienoate + H(+). It carries out the reaction 1-acyl-2-(5Z,8Z,11Z,14Z)-eicosatetraenoyl-sn-glycero-3-phosphoethanolamine + H2O = a 1-acyl-sn-glycero-3-phosphoethanolamine + (5Z,8Z,11Z,14Z)-eicosatetraenoate + H(+). It catalyses the reaction 1-hexadecanoyl-2-(5Z,8Z,11Z,14Z-eicosatetraenoyl)-sn-glycero-3-phosphoethanolamine + H2O = 1-hexadecanoyl-sn-glycero-3-phosphoethanolamine + (5Z,8Z,11Z,14Z)-eicosatetraenoate + H(+). The enzyme catalyses 1-hexadecanoyl-2-(5Z,8Z,11Z,14Z-eicosatetraenoyl)-sn-glycero-3-phosphocholine + H2O = 2-(5Z,8Z,11Z,14Z)-eicosatetraenoyl-sn-glycero-3-phosphocholine + hexadecanoate + H(+). The catalysed reaction is 1-octadecanoyl-2-(9Z-octadecenoyl)-sn-glycero-3-phosphocholine + H2O = 2-(9Z-octadecenoyl)-sn-glycero-3-phosphocholine + octadecanoate + H(+). It carries out the reaction 1-hexadecanoyl-2-(4Z,7Z,10Z,13Z,16Z,19Z-docosahexaenoyl)-sn-glycero-3-phosphocholine + H2O = 2-(4Z,7Z,10Z,13Z,16Z,19Z-docosahexaenoyl)-sn-glycero-3-phosphocholine + hexadecanoate + H(+). It catalyses the reaction 1-O-(1Z)-hexadecenyl-2 (5Z,8Z,11Z,14Z)-eicosatetraenoyl-sn-glycero-3-phosphocholine + H2O = 1-(1Z-hexadecenyl)-sn-glycero-3-phosphocholine + (5Z,8Z,11Z,14Z)-eicosatetraenoate + H(+). The enzyme catalyses 1-O-(1Z-hexadecenyl)-2-(9Z-octadecenoyl)-sn-glycero-3-phosphocholine + H2O = 1-(1Z-hexadecenyl)-sn-glycero-3-phosphocholine + (9Z)-octadecenoate + H(+). The catalysed reaction is 1-hexadecanoyl-sn-glycero-3-phosphocholine + H2O = sn-glycerol 3-phosphocholine + hexadecanoate + H(+). It carries out the reaction 1',3'-bis-[1,2-di-(9Z,12Z-octadecadienoyl)-sn-glycero-3-phospho]-glycerol + H2O = 1'-[1,2-di-(9Z,12Z-octadecadienoyl)-sn-glycero-3-phospho]-3'-[1-(9Z,12Z-octadecadienoyl)-sn-glycero-3-phospho]-glycerol + (9Z,12Z)-octadecadienoate + H(+). It catalyses the reaction 1'-[1-acyl-2-(9-hydroxy-(10E,12Z)-octadecadienoyl)-sn-glycero-3-phospho]-3'-[1,2-diacyl-sn-glycero-3-phospho]-glycerol + H2O = 9-hydroxy-(10E,12Z)-octadecadienoate + 1'-[1,2-diacyl-sn-glycero-3-phospho],3'-[1-acyl-sn-glycero-3-phospho]-glycerol + H(+). It functions in the pathway phospholipid metabolism. With respect to regulation, calcium-independent phospholipase. Inhibited by (E)-6-bromomethylene-3-1-naphthalenyl-2H-tetrahydropyran-2-one (BEL). The activity toward 1-hexadecanoyl-2-(5Z,8Z,11Z,14Z-eicosatetraenoyl)-sn-glycero-3-phosphocholine is stimulated by cardiolipin. Its function is as follows. Calcium-independent and membrane-bound phospholipase, that catalyzes the esterolytic cleavage of fatty acids from glycerophospholipids to yield free fatty acids and lysophospholipids, hence regulating membrane physical properties and the release of lipid second messengers and growth factors. Hydrolyzes phosphatidylethanolamine, phosphatidylcholine and probably phosphatidylinositol with a possible preference for the former. Also has a broad substrate specificity in terms of fatty acid moieties, hydrolyzing saturated and mono-unsaturated fatty acids at nearly equal rates from either the sn-1 or sn-2 position in diacyl phosphatidylcholine. However, has a weak activity toward polyunsaturated fatty acids at the sn-2 position, and thereby favors the production of 2-arachidonoyl lysophosphatidylcholine, a key branch point metabolite in eicosanoid signaling. On the other hand, can produce arachidonic acid from the sn-1 position of diacyl phospholipid and from the sn-2 position of arachidonate-containing plasmalogen substrates. Therefore, plays an important role in the mobilization of arachidonic acid in response to cellular stimuli and the generation of lipid second messengers. Can also hydrolyze lysophosphatidylcholine. In the mitochondrial compartment, catalyzes the hydrolysis and release of oxidized aliphatic chains from cardiolipin and integrates mitochondrial bioenergetics and signaling. It is essential for maintaining efficient bioenergetic mitochondrial function through tailoring mitochondrial membrane lipid metabolism and composition. The sequence is that of Calcium-independent phospholipase A2-gamma from Homo sapiens (Human).